The sequence spans 450 residues: Tol-Pal system protein TolB (450 aa).

Residues 1–37 form the signal peptide; it reads MIERNGLQRMPFRLNRRHMISGMASAAVLLGSRQALG.

It belongs to the TolB family. The Tol-Pal system is composed of five core proteins: the inner membrane proteins TolA, TolQ and TolR, the periplasmic protein TolB and the outer membrane protein Pal. They form a network linking the inner and outer membranes and the peptidoglycan layer.

The protein localises to the periplasm. Its function is as follows. Part of the Tol-Pal system, which plays a role in outer membrane invagination during cell division and is important for maintaining outer membrane integrity. The polypeptide is Tol-Pal system protein TolB (Nitrobacter winogradskyi (strain ATCC 25391 / DSM 10237 / CIP 104748 / NCIMB 11846 / Nb-255)).